Reading from the N-terminus, the 413-residue chain is Alpha-1-antitrypsin-like protein CM55-ST (413 aa).

Residues 1-24 (MPSSISWGLLLLAALSCLGPGSLA) form the signal peptide. Glutamine 25 carries the pyrrolidone carboxylic acid modification. N-linked (GlcNAc...) asparagine glycosylation is found at asparagine 65, asparagine 102, asparagine 165, and asparagine 266. The interval 368 to 387 (GGTVLGNIRSTLRYEVIFDR) is RCL.

Belongs to the serpin family. Expressed in liver.

The sequence is that of Alpha-1-antitrypsin-like protein CM55-ST from Tamias sibiricus (Siberian chipmunk).